Reading from the N-terminus, the 316-residue chain is 4-diphosphocytidyl-2-C-methyl-D-erythritol kinase (316 aa).

Residue Lys23 is part of the active site. 108–118 is an ATP binding site; it reads PVAGGMAGGSA. Residue Asp150 is part of the active site.

It belongs to the GHMP kinase family. IspE subfamily.

The catalysed reaction is 4-CDP-2-C-methyl-D-erythritol + ATP = 4-CDP-2-C-methyl-D-erythritol 2-phosphate + ADP + H(+). The protein operates within isoprenoid biosynthesis; isopentenyl diphosphate biosynthesis via DXP pathway; isopentenyl diphosphate from 1-deoxy-D-xylulose 5-phosphate: step 3/6. Its function is as follows. Catalyzes the phosphorylation of the position 2 hydroxy group of 4-diphosphocytidyl-2C-methyl-D-erythritol. The chain is 4-diphosphocytidyl-2-C-methyl-D-erythritol kinase from Mycobacterium avium (strain 104).